The sequence spans 473 residues: Aspartyl aminopeptidase 1 (473 aa).

Residue His93 coordinates Zn(2+). Position 168 (His168) interacts with substrate. Residues Asp262, Glu298, Glu299, and Asp343 each contribute to the Zn(2+) site. Glu298 is a binding site for substrate. Substrate is bound by residues Asp343, His346, Lys371, and Tyr378. His437 contributes to the Zn(2+) binding site.

This sequence belongs to the peptidase M18 family. As to quaternary structure, tetrahedron-shaped homododecamer built from six homodimers. Interacts with autophagy receptor Nbr1. Requires Zn(2+) as cofactor.

The protein resides in the cytoplasm. It localises to the vacuole lumen. The catalysed reaction is Release of an N-terminal aspartate or glutamate from a peptide, with a preference for aspartate.. Aspartyl aminopeptidase that is able to remove aspartyl residue at N-terminus of angiotensin I. Also acts as a chaperone and efficiently suppressed the thermal aggregation of citrate synthase. The sequence is that of Aspartyl aminopeptidase 1 (ape4) from Schizosaccharomyces pombe (strain 972 / ATCC 24843) (Fission yeast).